A 199-amino-acid polypeptide reads, in one-letter code: Large ribosomal subunit protein bL25 (199 aa).

The protein belongs to the bacterial ribosomal protein bL25 family. CTC subfamily. Part of the 50S ribosomal subunit; part of the 5S rRNA/L5/L18/L25 subcomplex. Contacts the 5S rRNA. Binds to the 5S rRNA independently of L5 and L18.

Its function is as follows. This is one of the proteins that binds to the 5S RNA in the ribosome where it forms part of the central protuberance. This chain is Large ribosomal subunit protein bL25, found in Pelobacter propionicus (strain DSM 2379 / NBRC 103807 / OttBd1).